Here is a 337-residue protein sequence, read N- to C-terminus: Cysteine synthase 3 (337 aa).

Residue K47 is modified to N6-(pyridoxal phosphate)lysine. Pyridoxal 5'-phosphate is bound by residues N78, 182 to 186 (GSSGT), and S270.

Belongs to the cysteine synthase/cystathionine beta-synthase family. As to quaternary structure, homodimer. It depends on pyridoxal 5'-phosphate as a cofactor.

The catalysed reaction is O-acetyl-L-serine + hydrogen sulfide = L-cysteine + acetate. It participates in amino-acid biosynthesis; L-cysteine biosynthesis; L-cysteine from L-serine: step 2/2. In terms of biological role, primarily catalyzes the formation of cysteine and acetate from O-acetylserine and hydrogen sulfide. Can also catalyze the formation of cysteine and acetate from S-sulfocysteine and hydrogen sulfide and the formation of cyanoalanine and hydrogen sulfide from either S-sulfocysteine or O-acetylserine and hydrogen cyanide. This Caenorhabditis elegans protein is Cysteine synthase 3.